Reading from the N-terminus, the 85-residue chain is Beta-defensin 18 (85 aa).

A signal peptide spans Met-1–Ser-23. Intrachain disulfides connect Cys-39–Cys-65, Cys-46–Cys-60, and Cys-50–Cys-66.

The protein belongs to the beta-defensin family.

The protein resides in the secreted. Functionally, has antibacterial activity. The chain is Beta-defensin 18 (Defb18) from Rattus norvegicus (Rat).